Reading from the N-terminus, the 371-residue chain is Probable protein phosphatase 2C 11 (371 aa).

The helical transmembrane segment at 29–49 (FFFFLFNSQTISSFIIFYLFL) threads the bilayer. Positions 67–95 (PPLSVAPLRGDANSPPPESSSSPATKSSL) are disordered. Over residues 85 to 94 (SSSSPATKSS) the composition is skewed to low complexity. Residues 123 to 368 (SYGYSSLKGK…DNITCIVVRF (246 aa)) enclose the PPM-type phosphatase domain. The Mn(2+) site is built by Asp-159, Gly-160, Asp-320, and Asp-359.

Belongs to the PP2C family. It depends on Mg(2+) as a cofactor. Mn(2+) is required as a cofactor.

The protein localises to the membrane. The catalysed reaction is O-phospho-L-seryl-[protein] + H2O = L-seryl-[protein] + phosphate. The enzyme catalyses O-phospho-L-threonyl-[protein] + H2O = L-threonyl-[protein] + phosphate. This is Probable protein phosphatase 2C 11 from Arabidopsis thaliana (Mouse-ear cress).